A 203-amino-acid polypeptide reads, in one-letter code: Formate hydrogenlyase subunit 2 (203 aa).

4 consecutive 4Fe-4S ferredoxin-type domains span residues 2–32 (NRFV…HGLQ), 42–72 (NEKE…TRVD), 73–102 (GAVQ…FSGS), and 137–169 (RAIA…LVDN). [4Fe-4S] cluster contacts are provided by Cys-12, Cys-15, Cys-18, Cys-22, Cys-51, Cys-54, Cys-59, Cys-63, Cys-82, Cys-85, Cys-88, Cys-92, Cys-143, Cys-146, Cys-155, and Cys-159.

In terms of assembly, FHL comprises of a formate dehydrogenase, unidentified electron carriers and a hydrogenase (isoenzyme 3). In this non-energy conserving pathway, molecular hydrogen and carbodioxide are released from formate. [4Fe-4S] cluster is required as a cofactor.

Functionally, probable electron transfer protein for hydrogenase 3. This is Formate hydrogenlyase subunit 2 (hycB) from Escherichia coli (strain K12).